The primary structure comprises 124 residues: Fluoride-specific ion channel FluC (124 aa).

Helical transmembrane passes span 4-24 (VIFI…LSGW), 32-52 (AFPY…GLIM), 68-88 (GLTI…YETF), and 96-116 (LLIA…FTWL). Na(+)-binding residues include glycine 75 and threonine 78.

This sequence belongs to the fluoride channel Fluc/FEX (TC 1.A.43) family.

It localises to the cell inner membrane. It carries out the reaction fluoride(in) = fluoride(out). Na(+) is not transported, but it plays an essential structural role and its presence is essential for fluoride channel function. Its function is as follows. Fluoride-specific ion channel. Important for reducing fluoride concentration in the cell, thus reducing its toxicity. This is Fluoride-specific ion channel FluC from Geotalea daltonii (strain DSM 22248 / JCM 15807 / FRC-32) (Geobacter daltonii).